Reading from the N-terminus, the 165-residue chain is Ribonuclease H2 subunit C (165 aa).

Met-1 is modified (N-acetylmethionine).

The protein belongs to the RNase H2 subunit C family. The RNase H2 complex is a heterotrimer composed of the catalytic subunit RNASEH2A and the non-catalytic subunits RNASEH2B and RNASEH2C.

It localises to the nucleus. In terms of biological role, non catalytic subunit of RNase H2, an endonuclease that specifically degrades the RNA of RNA:DNA hybrids. Participates in DNA replication, possibly by mediating the removal of lagging-strand Okazaki fragment RNA primers during DNA replication. Mediates the excision of single ribonucleotides from DNA:RNA duplexes. The polypeptide is Ribonuclease H2 subunit C (RNASEH2C) (Bos taurus (Bovine)).